The primary structure comprises 326 residues: Cobalamin biosynthesis protein CobD (326 aa).

4 consecutive transmembrane segments (helical) span residues 58–78 (MRGVATILILLAASILLGVVL), 81–101 (LFDVLGAVGFILEAITVAVFL), 157–177 (FSDGVVAPALWYAVAGLPGLL), and 304–324 (VFYRACTTLAAASAVLVLPFL).

This sequence belongs to the CobD/CbiB family.

It localises to the cell membrane. The protein operates within cofactor biosynthesis; adenosylcobalamin biosynthesis. Functionally, converts cobyric acid to cobinamide by the addition of aminopropanol on the F carboxylic group. This Sinorhizobium fredii (strain NBRC 101917 / NGR234) protein is Cobalamin biosynthesis protein CobD.